The primary structure comprises 366 residues: NADH-quinone oxidoreductase subunit D (366 aa).

This sequence belongs to the complex I 49 kDa subunit family. As to quaternary structure, NDH-1 is composed of 14 different subunits. Subunits NuoB, C, D, E, F, and G constitute the peripheral sector of the complex.

The protein resides in the cell membrane. The enzyme catalyses a quinone + NADH + 5 H(+)(in) = a quinol + NAD(+) + 4 H(+)(out). In terms of biological role, NDH-1 shuttles electrons from NADH, via FMN and iron-sulfur (Fe-S) centers, to quinones in the respiratory chain. The immediate electron acceptor for the enzyme in this species is believed to be a menaquinone. Couples the redox reaction to proton translocation (for every two electrons transferred, four hydrogen ions are translocated across the cytoplasmic membrane), and thus conserves the redox energy in a proton gradient. The polypeptide is NADH-quinone oxidoreductase subunit D (Bacillus mycoides (strain KBAB4) (Bacillus weihenstephanensis)).